The primary structure comprises 626 residues: Glutamate--cysteine ligase (626 aa).

This sequence belongs to the glutamate--cysteine ligase type 3 family. As to quaternary structure, monomer.

The catalysed reaction is L-cysteine + L-glutamate + ATP = gamma-L-glutamyl-L-cysteine + ADP + phosphate + H(+). Its pathway is sulfur metabolism; glutathione biosynthesis; glutathione from L-cysteine and L-glutamate: step 1/2. Its function is as follows. An essential enzyme in glutathione (L-gamma-glutamyl-L-cysteinylglycine, GSH) biosynthesis, GSH is essential for growth and differentiation to prespore stage. Catalyzes the condensation of glutamate to cysteine. The chain is Glutamate--cysteine ligase (gcsA) from Dictyostelium discoideum (Social amoeba).